The primary structure comprises 132 residues: Small ribosomal subunit protein uS11 (132 aa).

Belongs to the universal ribosomal protein uS11 family. In terms of assembly, part of the 30S ribosomal subunit. Interacts with proteins S7 and S18. Binds to IF-3.

Its function is as follows. Located on the platform of the 30S subunit, it bridges several disparate RNA helices of the 16S rRNA. Forms part of the Shine-Dalgarno cleft in the 70S ribosome. The polypeptide is Small ribosomal subunit protein uS11 (Alkaliphilus metalliredigens (strain QYMF)).